A 340-amino-acid chain; its full sequence is KH domain-containing RNA-binding protein QKI (340 aa).

One can recognise a KH domain in the interval 87 to 153; that stretch reads YVPVKEYPDF…WEHLNEDLHV (67 aa). The SH3-binding signature appears at 275–278; the sequence is PPGP. The Nuclear localization signal signature appears at 323–329; sequence RVHPYQR.

Belongs to the quaking family. Homodimer; does not require RNA to homodimerize.

Its subcellular location is the cytoplasm. The protein resides in the nucleus. RNA reader protein, which recognizes and binds specific RNAs, thereby regulating RNA metabolic processes, such as pre-mRNA splicing, circular RNA (circRNA) formation, mRNA export, mRNA stability and/or translation. Involved in various cellular processes, such as mRNA storage into stress granules, apoptosis, interferon response, glial cell fate and development. Binds to the 5'-NACUAAY-N(1,20)-UAAY-3' RNA core sequence. Acts as a mRNA modification reader that specifically recognizes and binds mRNA transcripts modified by internal N(7)-methylguanine (m7G). Promotes the formation of circular RNAs (circRNAs): acts by binding to sites flanking circRNA-forming exons. CircRNAs are produced by back-splicing circularization of pre-mRNAs. Required to protect and promote stability of mRNAs which promotes oligodendrocyte differentiation. Acts as an important regulator of muscle development. The protein is KH domain-containing RNA-binding protein QKI of Gallus gallus (Chicken).